The following is a 363-amino-acid chain: NADH-quinone oxidoreductase subunit H (363 aa).

9 consecutive transmembrane segments (helical) span residues 62–82 (GPMY…KLLF), 96–116 (FVIA…VVPF), 127–147 (VGLL…ILAG), 163–183 (AAQV…VMIA), 202–222 (FFDW…VSGV), 238–257 (EIVA…LFFL), 264–286 (ILVS…QGWV), 299–319 (KGGW…YIWF), and 339–359 (FIPL…YGVI).

Belongs to the complex I subunit 1 family. NDH-1 is composed of 14 different subunits. Subunits NuoA, H, J, K, L, M, N constitute the membrane sector of the complex.

Its subcellular location is the cell inner membrane. It carries out the reaction a quinone + NADH + 5 H(+)(in) = a quinol + NAD(+) + 4 H(+)(out). Functionally, NDH-1 shuttles electrons from NADH, via FMN and iron-sulfur (Fe-S) centers, to quinones in the respiratory chain. The immediate electron acceptor for the enzyme in this species is believed to be ubiquinone. Couples the redox reaction to proton translocation (for every two electrons transferred, four hydrogen ions are translocated across the cytoplasmic membrane), and thus conserves the redox energy in a proton gradient. This subunit may bind ubiquinone. This Xanthomonas axonopodis pv. citri (strain 306) protein is NADH-quinone oxidoreductase subunit H.